The sequence spans 466 residues: Asparagine--tRNA ligase (466 aa).

The protein belongs to the class-II aminoacyl-tRNA synthetase family. As to quaternary structure, homodimer.

It is found in the cytoplasm. The enzyme catalyses tRNA(Asn) + L-asparagine + ATP = L-asparaginyl-tRNA(Asn) + AMP + diphosphate + H(+). The polypeptide is Asparagine--tRNA ligase (Idiomarina loihiensis (strain ATCC BAA-735 / DSM 15497 / L2-TR)).